The chain runs to 125 residues: Small ribosomal subunit protein eS8 (125 aa).

The protein belongs to the eukaryotic ribosomal protein eS8 family. In terms of assembly, part of the 30S ribosomal subunit.

The sequence is that of Small ribosomal subunit protein eS8 from Methanosphaerula palustris (strain ATCC BAA-1556 / DSM 19958 / E1-9c).